The chain runs to 507 residues: ATP synthase subunit alpha, chloroplastic (507 aa).

Position 170 to 177 (170 to 177) interacts with ATP; it reads GDRQTGKT. A Phosphothreonine modification is found at T257.

It belongs to the ATPase alpha/beta chains family. In terms of assembly, F-type ATPases have 2 components, CF(1) - the catalytic core - and CF(0) - the membrane proton channel. CF(1) has five subunits: alpha(3), beta(3), gamma(1), delta(1), epsilon(1). CF(0) has four main subunits: a, b, b' and c.

The protein localises to the plastid. It localises to the chloroplast thylakoid membrane. The catalysed reaction is ATP + H2O + 4 H(+)(in) = ADP + phosphate + 5 H(+)(out). In terms of biological role, produces ATP from ADP in the presence of a proton gradient across the membrane. The alpha chain is a regulatory subunit. The chain is ATP synthase subunit alpha, chloroplastic from Capsella bursa-pastoris (Shepherd's purse).